The following is a 229-amino-acid chain: Large ribosomal subunit protein uL1 (229 aa).

The protein belongs to the universal ribosomal protein uL1 family. Part of the 50S ribosomal subunit.

Binds directly to 23S rRNA. The L1 stalk is quite mobile in the ribosome, and is involved in E site tRNA release. In terms of biological role, protein L1 is also a translational repressor protein, it controls the translation of the L11 operon by binding to its mRNA. This chain is Large ribosomal subunit protein uL1, found in Thermus thermophilus (strain ATCC BAA-163 / DSM 7039 / HB27).